The sequence spans 356 residues: S-adenosylmethionine:tRNA ribosyltransferase-isomerase (356 aa).

It belongs to the QueA family. Monomer.

It localises to the cytoplasm. It catalyses the reaction 7-aminomethyl-7-carbaguanosine(34) in tRNA + S-adenosyl-L-methionine = epoxyqueuosine(34) in tRNA + adenine + L-methionine + 2 H(+). The protein operates within tRNA modification; tRNA-queuosine biosynthesis. Its function is as follows. Transfers and isomerizes the ribose moiety from AdoMet to the 7-aminomethyl group of 7-deazaguanine (preQ1-tRNA) to give epoxyqueuosine (oQ-tRNA). The polypeptide is S-adenosylmethionine:tRNA ribosyltransferase-isomerase (Ralstonia nicotianae (strain ATCC BAA-1114 / GMI1000) (Ralstonia solanacearum)).